The sequence spans 491 residues: Carbohydrate ABC transporter substrate-binding protein (491 aa).

Zn(2+) contacts are provided by Asp212, His247, His252, and Glu256.

Belongs to the bacterial solute-binding protein 1 family. Exists as a monomer, homodimer, homotrimer and homotetramer; oligomerization increases with higher protein concentration.

The protein resides in the cell surface. Its function is as follows. Probably part of an ABC transporter complex involved in carbohydrate transport. The chain is Carbohydrate ABC transporter substrate-binding protein from Streptococcus pneumoniae serotype 4 (strain ATCC BAA-334 / TIGR4).